The primary structure comprises 444 residues: Maintenance of mitochondrial morphology protein 1 (444 aa).

The Lumenal portion of the chain corresponds to 1 to 110 (MNNLDNLAGN…SFSGWSFIEG (110 aa)). The helical transmembrane segment at 111-131 (FIIGQFSVIIVLIFFIKFFVF) threads the bilayer. The Cytoplasmic portion of the chain corresponds to 132 to 444 (SDGSSSNSSN…TDDVPLSKAE (313 aa)). Positions 207 to 419 (PSESLDWFNV…EPRFQCIRLP (213 aa)) constitute an SMP-LTD domain.

Belongs to the MMM1 family. In terms of assembly, homodimer. Component of the ER-mitochondria encounter structure (ERMES) or MDM complex, composed of MMM1, MDM10, MDM12 and MDM34. An MMM1 homodimer associates with one molecule of MDM12 on each side in a pairwise head-to-tail manner, and the SMP-LTD domains of MMM1 and MDM12 generate a continuous hydrophobic tunnel for phospholipid trafficking.

It localises to the endoplasmic reticulum membrane. Its function is as follows. Component of the ERMES/MDM complex, which serves as a molecular tether to connect the endoplasmic reticulum (ER) and mitochondria. Components of this complex are involved in the control of mitochondrial shape and protein biogenesis, and function in nonvesicular lipid trafficking between the ER and mitochondria. The MDM12-MMM1 subcomplex functions in the major beta-barrel assembly pathway that is responsible for biogenesis of all outer membrane beta-barrel proteins, and acts in a late step after the SAM complex. The MDM10-MDM12-MMM1 subcomplex further acts in the TOM40-specific pathway after the action of the MDM12-MMM1 complex. Essential for establishing and maintaining the structure of mitochondria and maintenance of mtDNA nucleoids. The polypeptide is Maintenance of mitochondrial morphology protein 1 (Vanderwaltozyma polyspora (strain ATCC 22028 / DSM 70294 / BCRC 21397 / CBS 2163 / NBRC 10782 / NRRL Y-8283 / UCD 57-17) (Kluyveromyces polysporus)).